The sequence spans 691 residues: Methionine--tRNA ligase (691 aa).

The short motif at 15 to 25 (PYTNGPIHIGH) is the 'HIGH' region element. Zn(2+) is bound by residues Cys-147, Cys-150, Cys-160, and Cys-163. Positions 336–340 (KLSTS) match the 'KMSKS' region motif. Thr-339 is a binding site for ATP. Residues 589 to 691 (DFTKMDLRVG…DGVKAGTTIN (103 aa)) enclose the tRNA-binding domain.

This sequence belongs to the class-I aminoacyl-tRNA synthetase family. MetG type 1 subfamily. As to quaternary structure, homodimer. Zn(2+) serves as cofactor.

The protein resides in the cytoplasm. The enzyme catalyses tRNA(Met) + L-methionine + ATP = L-methionyl-tRNA(Met) + AMP + diphosphate. Functionally, is required not only for elongation of protein synthesis but also for the initiation of all mRNA translation through initiator tRNA(fMet) aminoacylation. This Christiangramia forsetii (strain DSM 17595 / CGMCC 1.15422 / KT0803) (Gramella forsetii) protein is Methionine--tRNA ligase.